A 417-amino-acid polypeptide reads, in one-letter code: V-set and immunoglobulin domain-containing protein 8 (417 aa).

A signal peptide spans 1–21 (MGVRGALHLLLVCLSPALLSA). 2 consecutive Ig-like V-type domains span residues 22–140 (VRIN…VIVT) and 145–256 (PAVP…VKVS). Over 22-262 (VRINGDGQEV…VKVSDSQRVG (241 aa)) the chain is Extracellular. 2 cysteine pairs are disulfide-bonded: Cys44/Cys125 and Cys166/Cys238. Residues 263-283 (MIVGAVLGSLLMLACLALGIW) form a helical membrane-spanning segment. Residues 284 to 417 (GLICCCCGGG…QRSCKDGLLV (134 aa)) lie on the Cytoplasmic side of the membrane.

It localises to the membrane. This is V-set and immunoglobulin domain-containing protein 8 (Vsig8) from Mus musculus (Mouse).